A 422-amino-acid chain; its full sequence is Serine--tRNA ligase (422 aa).

238–240 (TSE) serves as a coordination point for L-serine. 269-271 (RKE) lines the ATP pocket. Position 292 (Glu-292) interacts with L-serine. 356 to 359 (EISS) contacts ATP. An L-serine-binding site is contributed by Ser-390.

The protein belongs to the class-II aminoacyl-tRNA synthetase family. Type-1 seryl-tRNA synthetase subfamily. In terms of assembly, homodimer. The tRNA molecule binds across the dimer.

The protein localises to the cytoplasm. It catalyses the reaction tRNA(Ser) + L-serine + ATP = L-seryl-tRNA(Ser) + AMP + diphosphate + H(+). It carries out the reaction tRNA(Sec) + L-serine + ATP = L-seryl-tRNA(Sec) + AMP + diphosphate + H(+). Its pathway is aminoacyl-tRNA biosynthesis; selenocysteinyl-tRNA(Sec) biosynthesis; L-seryl-tRNA(Sec) from L-serine and tRNA(Sec): step 1/1. Catalyzes the attachment of serine to tRNA(Ser). Is also able to aminoacylate tRNA(Sec) with serine, to form the misacylated tRNA L-seryl-tRNA(Sec), which will be further converted into selenocysteinyl-tRNA(Sec). The polypeptide is Serine--tRNA ligase (Helicobacter hepaticus (strain ATCC 51449 / 3B1)).